Consider the following 364-residue polypeptide: UDP-N-acetylglucosamine--N-acetylmuramyl-(pentapeptide) pyrophosphoryl-undecaprenol N-acetylglucosamine transferase 1 (364 aa).

UDP-N-acetyl-alpha-D-glucosamine contacts are provided by residues 10-12 (TGG), N124, S195, I250, and Q295.

Belongs to the glycosyltransferase 28 family. MurG subfamily.

The protein resides in the cell membrane. The catalysed reaction is di-trans,octa-cis-undecaprenyl diphospho-N-acetyl-alpha-D-muramoyl-L-alanyl-D-glutamyl-meso-2,6-diaminopimeloyl-D-alanyl-D-alanine + UDP-N-acetyl-alpha-D-glucosamine = di-trans,octa-cis-undecaprenyl diphospho-[N-acetyl-alpha-D-glucosaminyl-(1-&gt;4)]-N-acetyl-alpha-D-muramoyl-L-alanyl-D-glutamyl-meso-2,6-diaminopimeloyl-D-alanyl-D-alanine + UDP + H(+). The protein operates within cell wall biogenesis; peptidoglycan biosynthesis. Its function is as follows. Cell wall formation. Catalyzes the transfer of a GlcNAc subunit on undecaprenyl-pyrophosphoryl-MurNAc-pentapeptide (lipid intermediate I) to form undecaprenyl-pyrophosphoryl-MurNAc-(pentapeptide)GlcNAc (lipid intermediate II). This chain is UDP-N-acetylglucosamine--N-acetylmuramyl-(pentapeptide) pyrophosphoryl-undecaprenol N-acetylglucosamine transferase 1, found in Bacillus cereus (strain ATCC 10987 / NRS 248).